Consider the following 253-residue polypeptide: 2-C-methyl-D-erythritol 4-phosphate cytidylyltransferase (253 aa).

Belongs to the IspD/TarI cytidylyltransferase family. IspD subfamily.

It carries out the reaction 2-C-methyl-D-erythritol 4-phosphate + CTP + H(+) = 4-CDP-2-C-methyl-D-erythritol + diphosphate. Its pathway is isoprenoid biosynthesis; isopentenyl diphosphate biosynthesis via DXP pathway; isopentenyl diphosphate from 1-deoxy-D-xylulose 5-phosphate: step 2/6. Catalyzes the formation of 4-diphosphocytidyl-2-C-methyl-D-erythritol from CTP and 2-C-methyl-D-erythritol 4-phosphate (MEP). In Idiomarina loihiensis (strain ATCC BAA-735 / DSM 15497 / L2-TR), this protein is 2-C-methyl-D-erythritol 4-phosphate cytidylyltransferase.